The sequence spans 142 residues: Transcriptional regulator MraZ (142 aa).

2 consecutive SpoVT-AbrB domains span residues 5–51 and 77–120; these read ASAL…PRPE and AMDV…DSQT.

This sequence belongs to the MraZ family. Forms oligomers.

It is found in the cytoplasm. The protein resides in the nucleoid. The chain is Transcriptional regulator MraZ from Burkholderia multivorans (strain ATCC 17616 / 249).